Reading from the N-terminus, the 185-residue chain is Acireductone dioxygenase (185 aa).

The disordered stretch occupies residues 1–22; that stretch reads MSRLSIHPEGSTNATSPAEPLL. Fe(2+) contacts are provided by H102, H104, E108, and H146. Ni(2+) contacts are provided by H102, H104, E108, and H146.

This sequence belongs to the acireductone dioxygenase (ARD) family. In terms of assembly, monomer. It depends on Fe(2+) as a cofactor. The cofactor is Ni(2+).

It catalyses the reaction 1,2-dihydroxy-5-(methylsulfanyl)pent-1-en-3-one + O2 = 3-(methylsulfanyl)propanoate + CO + formate + 2 H(+). The enzyme catalyses 1,2-dihydroxy-5-(methylsulfanyl)pent-1-en-3-one + O2 = 4-methylsulfanyl-2-oxobutanoate + formate + 2 H(+). It participates in amino-acid biosynthesis; L-methionine biosynthesis via salvage pathway; L-methionine from S-methyl-5-thio-alpha-D-ribose 1-phosphate: step 5/6. In terms of biological role, catalyzes 2 different reactions between oxygen and the acireductone 1,2-dihydroxy-3-keto-5-methylthiopentene (DHK-MTPene) depending upon the metal bound in the active site. Fe-containing acireductone dioxygenase (Fe-ARD) produces formate and 2-keto-4-methylthiobutyrate (KMTB), the alpha-ketoacid precursor of methionine in the methionine recycle pathway. Ni-containing acireductone dioxygenase (Ni-ARD) produces methylthiopropionate, carbon monoxide and formate, and does not lie on the methionine recycle pathway. In Prochlorococcus marinus (strain MIT 9313), this protein is Acireductone dioxygenase.